Consider the following 648-residue polypeptide: DNA mismatch repair protein MutL (648 aa).

The interval 336–443 is disordered; sequence ERPFEPSSPQ…SGSAGESRAR (108 aa). The span at 370-381 shows a compositional bias: polar residues; that stretch reads SPESKTHSTWNE. The span at 383–410 shows a compositional bias: basic and acidic residues; sequence SRVDTSRAETSRESRIDSPLGERTRDIA.

The protein belongs to the DNA mismatch repair MutL/HexB family.

Its function is as follows. This protein is involved in the repair of mismatches in DNA. It is required for dam-dependent methyl-directed DNA mismatch repair. May act as a 'molecular matchmaker', a protein that promotes the formation of a stable complex between two or more DNA-binding proteins in an ATP-dependent manner without itself being part of a final effector complex. In Shewanella sp. (strain ANA-3), this protein is DNA mismatch repair protein MutL.